The primary structure comprises 349 residues: Phosphorylcholine phosphatase (349 aa).

Positions 1 to 22 are cleaved as a signal peptide; it reads MTFAKGILAALALAAAVGQASA. The active-site Nucleophile is the Asp53. Positions 53 and 55 each coordinate Mg(2+). Asp55 acts as the Proton donor in catalysis. Cys109 and Cys116 form a disulfide bridge. Asp284 contacts Mg(2+).

It belongs to the HAD-like hydrolase superfamily. In terms of assembly, monomer. Homodimer. Homotetramer. The cofactor is Mg(2+).

It is found in the periplasm. The catalysed reaction is phosphocholine + H2O = choline + phosphate. It catalyses the reaction phosphoethanolamine + H2O = ethanolamine + phosphate. Its activity is regulated as follows. Activity is inhibited by high concentrations of phosphorylcholine, phosphorylethanolamine, choline or betaine. Displays different properties depending on the substrate utilized, the pH conditions as well as the presence or absence of metal ions. At pH 5, activity is inhibited by Al(3+) ions. At pH 7.4, the enzyme cannot catalyze the hydrolysis of pNPP, phosphorylethanolamine is a poor substrate in either the presence or absence of divalent cations, and activity measured with phosphorylcholine is independent of divalent cations or is not inhibited by Al(3+) ions. Mg(2+) produces identical activation at pH 5.0 and 7.4, but Zn(2+) is an activator at pH 5.0 and becomes an inhibitor at pH 7.4. This inhibition at pH 7.4 may be due to a transition from octahedral to tetrahedral coordination geometry, which is produced by hydrolysis of the Zn-hexacoordinated complex. Catalyzes the hydrolysis of phosphorylcholine (PCho) to produce choline and inorganic phosphate. Can also hydrolyze phosphorylethanolamine and the nonphysiological substrate p-nitrophenylphosphate (pNPP). Shows higher affinity and catalytic efficiency with phosphorylcholine as substrate. Its function is as follows. Is probably involved in virulence. The bacteria may break down various host compounds or host cell membranes through the coordinated action of phospholipase C and phosphocholine phosphatase. The final consequence of the action of these enzymes is an increase of the free choline concentration, which may promote the pathogenicity of P.aeruginosa. This is Phosphorylcholine phosphatase from Pseudomonas aeruginosa (strain ATCC 15692 / DSM 22644 / CIP 104116 / JCM 14847 / LMG 12228 / 1C / PRS 101 / PAO1).